Consider the following 364-residue polypeptide: 4-hydroxythreonine-4-phosphate dehydrogenase (364 aa).

Substrate is bound by residues histidine 138 and threonine 139. The a divalent metal cation site is built by histidine 169, histidine 214, and histidine 269. The substrate site is built by lysine 277, asparagine 286, and arginine 295.

This sequence belongs to the PdxA family. In terms of assembly, homodimer. A divalent metal cation serves as cofactor.

The protein resides in the cytoplasm. The enzyme catalyses 4-(phosphooxy)-L-threonine + NAD(+) = 3-amino-2-oxopropyl phosphate + CO2 + NADH. The protein operates within cofactor biosynthesis; pyridoxine 5'-phosphate biosynthesis; pyridoxine 5'-phosphate from D-erythrose 4-phosphate: step 4/5. Catalyzes the NAD(P)-dependent oxidation of 4-(phosphooxy)-L-threonine (HTP) into 2-amino-3-oxo-4-(phosphooxy)butyric acid which spontaneously decarboxylates to form 3-amino-2-oxopropyl phosphate (AHAP). This Bacteroides thetaiotaomicron (strain ATCC 29148 / DSM 2079 / JCM 5827 / CCUG 10774 / NCTC 10582 / VPI-5482 / E50) protein is 4-hydroxythreonine-4-phosphate dehydrogenase.